Here is a 119-residue protein sequence, read N- to C-terminus: Immunoglobulin lambda variable 2-11 (119 aa).

Residues 1–19 (MAWALLLLSLLTQGTGSWA) form the signal peptide. Q20 carries the post-translational modification Pyrrolidone carboxylic acid. Residues 20–44 (QSALTQPRSVSGSPGQSVTISCTGT) are framework-1. Positions 20–119 (QSALTQPRSV…CSYAGSYTFH (100 aa)) constitute an Ig-like domain. A disulfide bridge links C41 with C109. The tract at residues 45–53 (SSDVGGYNY) is complementarity-determining-1. The segment at 54–70 (VSWYQQHPGKAPKLMIY) is framework-2. Residues 71-73 (DVS) are complementarity-determining-2. A framework-3 region spans residues 74-109 (KRPSGVPDRFSGSKSGNTASLTISGLQAEDEADYYC). The segment at 110–119 (CSYAGSYTFH) is complementarity-determining-3.

Immunoglobulins are composed of two identical heavy chains and two identical light chains; disulfide-linked.

It localises to the secreted. Its subcellular location is the cell membrane. Its function is as follows. V region of the variable domain of immunoglobulin light chains that participates in the antigen recognition. Immunoglobulins, also known as antibodies, are membrane-bound or secreted glycoproteins produced by B lymphocytes. In the recognition phase of humoral immunity, the membrane-bound immunoglobulins serve as receptors which, upon binding of a specific antigen, trigger the clonal expansion and differentiation of B lymphocytes into immunoglobulins-secreting plasma cells. Secreted immunoglobulins mediate the effector phase of humoral immunity, which results in the elimination of bound antigens. The antigen binding site is formed by the variable domain of one heavy chain, together with that of its associated light chain. Thus, each immunoglobulin has two antigen binding sites with remarkable affinity for a particular antigen. The variable domains are assembled by a process called V-(D)-J rearrangement and can then be subjected to somatic hypermutations which, after exposure to antigen and selection, allow affinity maturation for a particular antigen. This is Immunoglobulin lambda variable 2-11 from Homo sapiens (Human).